The primary structure comprises 275 residues: Dihydropteroate synthase (275 aa).

Residues 15-267 (PQIMGILNFT…DVAATSDMLK (253 aa)) enclose the Pterin-binding domain. N22 provides a ligand contact to Mg(2+). (7,8-dihydropterin-6-yl)methyl diphosphate-binding positions include T62, D96, N115, D185, K221, and 255–257 (RVH).

Belongs to the DHPS family. As to quaternary structure, homodimer. Mg(2+) is required as a cofactor.

The enzyme catalyses (7,8-dihydropterin-6-yl)methyl diphosphate + 4-aminobenzoate = 7,8-dihydropteroate + diphosphate. Its pathway is cofactor biosynthesis; tetrahydrofolate biosynthesis; 7,8-dihydrofolate from 2-amino-4-hydroxy-6-hydroxymethyl-7,8-dihydropteridine diphosphate and 4-aminobenzoate: step 1/2. Catalyzes the condensation of para-aminobenzoate (pABA) with 6-hydroxymethyl-7,8-dihydropterin diphosphate (DHPt-PP) to form 7,8-dihydropteroate (H2Pte), the immediate precursor of folate derivatives. This is Dihydropteroate synthase (folP-A) from Haemophilus influenzae (strain ATCC 51907 / DSM 11121 / KW20 / Rd).